The sequence spans 1106 residues: Exportin-T (1106 aa).

A disordered region spans residues threonine 336–aspartate 357. The span at arginine 343–aspartate 357 shows a compositional bias: polar residues.

The protein belongs to the exportin family.

It localises to the nucleus. The protein resides in the cytoplasm. Functionally, tRNA nucleus export receptor which facilitates tRNA translocation across the nuclear pore complex. Involved in pre-tRNA splicing, probably by affecting the interaction of pre-tRNA with splicing endonuclease. This is Exportin-T (LOS1) from Mycosarcoma maydis (Corn smut fungus).